Consider the following 228-residue polypeptide: Cytokinin riboside 5'-monophosphate phosphoribohydrolase LOG5 (228 aa).

Residues Glu-79, 97 to 98 (RK), and 114 to 120 (GYGTLEE) each bind substrate.

Belongs to the LOG family. In terms of tissue distribution, expressed in roots and shoots. Detected in vascular tissues of roots, cotyledons, and leaves, axillary buds, immature and mature flowers, fruit abscission zones and ovules.

The protein resides in the cytoplasm. Its subcellular location is the nucleus. The enzyme catalyses N(6)-(dimethylallyl)adenosine 5'-phosphate + H2O = N(6)-dimethylallyladenine + D-ribose 5-phosphate. It carries out the reaction 9-ribosyl-trans-zeatin 5'-phosphate + H2O = trans-zeatin + D-ribose 5-phosphate. Functionally, cytokinin-activating enzyme working in the direct activation pathway. Phosphoribohydrolase that converts inactive cytokinin nucleotides to the biologically active free-base forms. In Arabidopsis thaliana (Mouse-ear cress), this protein is Cytokinin riboside 5'-monophosphate phosphoribohydrolase LOG5 (LOG5).